The sequence spans 242 residues: 1-(5-phosphoribosyl)-5-[(5-phosphoribosylamino)methylideneamino] imidazole-4-carboxamide isomerase (242 aa).

Aspartate 10 serves as the catalytic Proton acceptor. The Proton donor role is filled by aspartate 132.

The protein belongs to the HisA/HisF family.

The protein localises to the cytoplasm. It catalyses the reaction 1-(5-phospho-beta-D-ribosyl)-5-[(5-phospho-beta-D-ribosylamino)methylideneamino]imidazole-4-carboxamide = 5-[(5-phospho-1-deoxy-D-ribulos-1-ylimino)methylamino]-1-(5-phospho-beta-D-ribosyl)imidazole-4-carboxamide. Its pathway is amino-acid biosynthesis; L-histidine biosynthesis; L-histidine from 5-phospho-alpha-D-ribose 1-diphosphate: step 4/9. The polypeptide is 1-(5-phosphoribosyl)-5-[(5-phosphoribosylamino)methylideneamino] imidazole-4-carboxamide isomerase (Methanothrix thermoacetophila (strain DSM 6194 / JCM 14653 / NBRC 101360 / PT) (Methanosaeta thermophila)).